Here is a 282-residue protein sequence, read N- to C-terminus: Glutamate--LysW ligase ArgX (282 aa).

Residues Lys87, Lys127, 131–137 (GSWGRLV), and 167–178 (QEYIQYKGRDIR) contribute to the ATP site. An ATP-grasp domain is found at 91 to 277 (YSKLYREGIP…VAQKLVEYIK (187 aa)). Arg192 is a binding site for substrate. Asn202 contributes to the ATP binding site. 203–204 (VA) contacts substrate. Mg(2+) is bound by residues Asp237, Glu250, and Asn252. 256-260 (EFKGF) provides a ligand contact to substrate. A GF motif that is essential for ArgX substrate specificity motif is present at residues 259–260 (GF).

The protein belongs to the RimK family. LysX subfamily. As to quaternary structure, homotetramer. Interacts with LysW. Mg(2+) is required as a cofactor.

The catalysed reaction is [amino-group carrier protein]-C-terminal-L-glutamate + L-glutamate + ATP = [amino-group carrier protein]-C-terminal-gamma-(L-glutamyl)-L-glutamate + ADP + phosphate + H(+). It participates in amino-acid biosynthesis; L-arginine biosynthesis. Functionally, catalyzes the ATP-dependent formation of a covalent bond between the amino group of glutamate and the gamma-carboxyl group of the C-terminal glutamate residue in LysW. This Sulfurisphaera tokodaii (strain DSM 16993 / JCM 10545 / NBRC 100140 / 7) (Sulfolobus tokodaii) protein is Glutamate--LysW ligase ArgX.